The sequence spans 602 residues: Elongation factor 4 (602 aa).

Positions Asn7 to Gln189 constitute a tr-type G domain. GTP-binding positions include Asp19–Thr24 and Asn136–Asp139.

Belongs to the TRAFAC class translation factor GTPase superfamily. Classic translation factor GTPase family. LepA subfamily.

The protein resides in the cell inner membrane. It carries out the reaction GTP + H2O = GDP + phosphate + H(+). In terms of biological role, required for accurate and efficient protein synthesis under certain stress conditions. May act as a fidelity factor of the translation reaction, by catalyzing a one-codon backward translocation of tRNAs on improperly translocated ribosomes. Back-translocation proceeds from a post-translocation (POST) complex to a pre-translocation (PRE) complex, thus giving elongation factor G a second chance to translocate the tRNAs correctly. Binds to ribosomes in a GTP-dependent manner. The chain is Elongation factor 4 from Protochlamydia amoebophila (strain UWE25).